The chain runs to 357 residues: UDP-N-acetylglucosamine 2-epimerase homolog (357 aa).

Belongs to the UDP-N-acetylglucosamine 2-epimerase family.

The protein is UDP-N-acetylglucosamine 2-epimerase homolog of Methanococcus maripaludis (strain DSM 14266 / JCM 13030 / NBRC 101832 / S2 / LL).